A 180-amino-acid polypeptide reads, in one-letter code: Nucleoside triphosphate/diphosphate phosphatase (180 aa).

Arg26 functions as the Proton donor in the catalytic mechanism. Asn90, Asp106, Asp108, Asp110, Asp123, and Glu126 together coordinate Mg(2+).

It belongs to the Ntdp family. Mg(2+) is required as a cofactor.

The catalysed reaction is a ribonucleoside 5'-triphosphate + H2O = a ribonucleoside 5'-diphosphate + phosphate + H(+). The enzyme catalyses a ribonucleoside 5'-diphosphate + H2O = a ribonucleoside 5'-phosphate + phosphate + H(+). Functionally, has nucleoside phosphatase activity towards nucleoside triphosphates and nucleoside diphosphates. The sequence is that of Nucleoside triphosphate/diphosphate phosphatase from Staphylococcus epidermidis (strain ATCC 35984 / DSM 28319 / BCRC 17069 / CCUG 31568 / BM 3577 / RP62A).